Here is a 249-residue protein sequence, read N- to C-terminus: Chitooligosaccharide deacetylase (249 aa).

The Mg(2+) site is built by His61 and His125.

It belongs to the YdjC deacetylase family. ChbG subfamily. As to quaternary structure, homodimer. Requires Mg(2+) as cofactor.

It localises to the cytoplasm. It carries out the reaction N,N'-diacetylchitobiose + H2O = N-acetyl-beta-D-glucosaminyl-(1-&gt;4)-D-glucosamine + acetate. The enzyme catalyses diacetylchitobiose-6'-phosphate + H2O = N'-monoacetylchitobiose-6'-phosphate + acetate. The protein operates within glycan degradation; chitin degradation. Functionally, involved in the degradation of chitin. ChbG is essential for growth on the acetylated chitooligosaccharides chitobiose and chitotriose but is dispensable for growth on cellobiose and chitosan dimer, the deacetylated form of chitobiose. Deacetylation of chitobiose-6-P and chitotriose-6-P is necessary for both the activation of the chb promoter by the regulatory protein ChbR and the hydrolysis of phosphorylated beta-glucosides by the phospho-beta-glucosidase ChbF. Catalyzes the removal of only one acetyl group from chitobiose-6-P to yield monoacetylchitobiose-6-P, the inducer of ChbR and the substrate of ChbF. In Escherichia coli O9:H4 (strain HS), this protein is Chitooligosaccharide deacetylase.